A 21-amino-acid chain; its full sequence is Neuropeptide gamma (21 aa).

The interval 1 to 21 (SSANPQITRKRHKINSFVGLM) is disordered. A Methionine amide modification is found at Met-21.

It belongs to the tachykinin family.

It is found in the secreted. Functionally, tachykinins are active peptides which excite neurons, evoke behavioral responses, and contract (directly or indirectly) many smooth muscles. Is a potent vasoconstrictor and secretagogue that plays a regulatory role in the central control of ventilation, in particular, the heart rate variability (HRV). The polypeptide is Neuropeptide gamma (Oncorhynchus mykiss (Rainbow trout)).